A 210-amino-acid polypeptide reads, in one-letter code: Cell division protein SepF (210 aa).

Disordered regions lie at residues 22–72 and 79–98; these read DYYE…FDDA and RGPR…RGST. Basic and acidic residues-rich tracts occupy residues 37 to 60 and 79 to 88; these read RPRE…REYD and RGPREFDRTP.

The protein belongs to the SepF family. In terms of assembly, homodimer. Interacts with FtsZ.

Its subcellular location is the cytoplasm. Cell division protein that is part of the divisome complex and is recruited early to the Z-ring. Probably stimulates Z-ring formation, perhaps through the cross-linking of FtsZ protofilaments. Its function overlaps with FtsA. The chain is Cell division protein SepF from Mycolicibacterium vanbaalenii (strain DSM 7251 / JCM 13017 / BCRC 16820 / KCTC 9966 / NRRL B-24157 / PYR-1) (Mycobacterium vanbaalenii).